The sequence spans 621 residues: Exonuclease 3'-5' domain-containing protein 2 (621 aa).

The Mitochondrial intermembrane portion of the chain corresponds to 1 to 4 (MSRQ). The helical transmembrane segment at 5–25 (NLVALTVTTLLGVAVGGFVLW) threads the bilayer. The Cytoplasmic portion of the chain corresponds to 26-621 (KGIQRRRRSK…FGEDLPIQLS (596 aa)). Residues 34–68 (SKTSPVTQQPQQKVLGSRELPPPEDDQLHSSAPRS) are disordered. Positions 36–47 (TSPVTQQPQQKV) are enriched in polar residues. Positions 108, 110, and 246 each coordinate a divalent metal cation. Residues 155–247 (ILADGTILKV…DQVIYAARDA (93 aa)) form the 3'-5' exonuclease domain. Residues 299–343 (RLGEEVNGEATESQQKPRNKKSKMDGMVPGNHQGRDPRKHKRKPL) are disordered.

The protein belongs to the EXD2 family. In terms of assembly, homodimer. Interacts with RBBP8, MRE11 and BRCA1. Requires Mg(2+) as cofactor. Mn(2+) serves as cofactor.

The protein resides in the mitochondrion outer membrane. It is found in the mitochondrion matrix. It localises to the nucleus. The protein localises to the chromosome. The enzyme catalyses Exonucleolytic cleavage in the 3'- to 5'-direction to yield nucleoside 5'-phosphates.. Exonuclease that has both 3'-5' exoribonuclease and exodeoxyribonuclease activities, depending on the divalent metal cation used as cofactor. In presence of Mg(2+), only shows 3'-5' exoribonuclease activity, while it shows both exoribonuclease and exodeoxyribonuclease activities in presence of Mn(2+). Acts as an exoribonuclease in mitochondrion, possibly by regulating ATP production and mitochondrial translation. Also involved in the response to DNA damage. Acts as 3'-5' exodeoxyribonuclease for double-strand breaks resection and efficient homologous recombination. Plays a key role in controlling the initial steps of chromosomal break repair, it is recruited to chromatin in a damage-dependent manner and functionally interacts with the MRN complex to accelerate resection through its 3'-5' exonuclease activity, which efficiently processes double-stranded DNA substrates containing nicks. Also involved in response to replicative stress: recruited to stalled forks and is required to stabilize and restart stalled replication forks by restraining excessive fork regression, thereby suppressing their degradation. The protein is Exonuclease 3'-5' domain-containing protein 2 of Homo sapiens (Human).